The primary structure comprises 175 residues: Early E1A protein (175 aa).

The interaction with RB1 in competition with E2F1 stretch occupies residues 40-48; that stretch reads PSLHDLFDL. An LXCXE motif, interaction with host RB1 motif is present at residues 106–110; the sequence is LLCLE. A zinc finger spans residues 146–164; that stretch reads CLRCAYYQEQGENSICGLC.

Belongs to the adenoviridae E1A protein family. In terms of assembly, interacts with host UBE2I; this interaction interferes with polySUMOylation. Interacts with host RB1; this interaction induces the aberrant dissociation of RB1-E2F1 complex thereby disrupting the activity of RB1 and activating E2F1-regulated genes. Interacts with host ATF7; the interaction enhances ATF7-mediated viral transactivation activity which requires the zinc binding domains of both proteins. Isoform early E1A 32 kDa protein and isoform early E1A 26 kDa protein interact (via N-terminus) with CUL1 and E3 ubiquitin ligase RBX1; these interactions inhibit RBX1-CUL1-dependent elongation reaction of ubiquitin chains and attenuate ubiquitination of SCF(FBXW7) target proteins. Interacts (via PXLXP motif) with host ZMYND11/BS69 (via MYND-type zinc finger); this interaction inhibits E1A mediated transactivation. Interacts with host EP300; this interaction stimulates the acetylation of RB1 by recruiting EP300 and RB1 into a multimeric-protein complex. Interacts with host CTBP1 and CTBP2; this interaction seems to potentiate viral replication. Interacts with host DCAF7. Interacts with host DYRK1A. Interacts with host KPNA4; this interaction allows E1A import into the host nucleus. Interacts with host EP400; this interaction stabilizes MYC. Interacts with host TBP protein; this interaction probably disrupts the TBP-TATA complex.

Its subcellular location is the host nucleus. Plays a role in viral genome replication by driving entry of quiescent cells into the cell cycle. Stimulation of progression from G1 to S phase allows the virus to efficiently use the cellular DNA replicating machinery to achieve viral genome replication. E1A protein has both transforming and trans-activating activities. Induces the disassembly of the E2F1 transcription factor from RB1 by direct competition for the same binding site on RB1, with subsequent transcriptional activation of E2F1-regulated S-phase genes and of the E2 region of the adenoviral genome. Release of E2F1 leads to the ARF-mediated inhibition of MDM2 and causes TP53/p53 to accumulate because it is not targeted for degradation by MDM2-mediated ubiquitination anymore. This increase in TP53, in turn, would arrest the cell proliferation and direct its death but this effect is counteracted by the viral protein E1B-55K. Inactivation of the ability of RB1 to arrest the cell cycle is critical for cellular transformation, uncontrolled cellular growth and proliferation induced by viral infection. Interaction with RBX1 and CUL1 inhibits ubiquitination of the proteins targeted by SCF(FBXW7) ubiquitin ligase complex, and may be linked to unregulated host cell proliferation. The tumorigenesis-restraining activity of E1A may be related to the disruption of the host CtBP-CtIP complex through the CtBP binding motif. The polypeptide is Early E1A protein (Canis lupus familiaris (Dog)).